The chain runs to 820 residues: Pentatricopeptide repeat-containing protein At3g22150, chloroplastic (820 aa).

Residues 1 to 42 (MAGSALPLPPPPPLSLQSPSQNQTRHSSTFSPPTLTPQTPSI) form a disordered region. The N-terminal 50 residues, 1 to 50 (MAGSALPLPPPPPLSLQSPSQNQTRHSSTFSPPTLTPQTPSIRSRLSKIC), are a transit peptide targeting the chloroplast. Residues 22–42 (NQTRHSSTFSPPTLTPQTPSI) are compositionally biased toward polar residues. PPR repeat units follow at residues 69-99 (TTVL…MKKT), 106-136 (DAYT…LIRC), 141-177 (SRVV…MRRK), 178-212 (NVVA…EVKP), 213-247 (SPVS…GDEY), 250-284 (DLFV…NIEV), 285-316 (WNTM…EIVS), 317-347 (DEVT…VSKN), 352-382 (PIVI…MRER), 383-417 (DVVS…GFKI), 418-452 (DYIT…GIQF), 485-519 (DQAT…NIRP), 520-550 (NAVT…SIRQ), 555-585 (NVFV…TKER), 586-620 (NSVT…GIKP), 621-651 (DAIT…MREV), and 657-691 (SSEH…GNIA). The interval 693-770 (LWGSLLGSCK…EVGRSGIEIA (78 aa)) is type E motif. The interval 771–801 (GYVNCFVSRDQEHPHSSEIYDVIDGLAKDMR) is type E(+) motif.

The protein belongs to the PPR family. PCMP-E subfamily.

It is found in the plastid. The protein resides in the chloroplast. The sequence is that of Pentatricopeptide repeat-containing protein At3g22150, chloroplastic (PCMP-E95) from Arabidopsis thaliana (Mouse-ear cress).